Reading from the N-terminus, the 391-residue chain is Phosphatidate cytidylyltransferase 4, chloroplastic (391 aa).

The N-terminal 61 residues, 1-61 (MATFAELVLS…SVSRRFLTAV (61 aa)), are a transit peptide targeting the chloroplast. Transmembrane regions (helical) follow at residues 102-122 (IFGI…GWVF), 175-195 (FGNI…ALLV), 202-222 (FAQL…PSFW), 254-274 (VGLV…TFAF), 298-318 (IVGL…LSWP), and 321-341 (LFSS…GDLT).

This sequence belongs to the CDS family. Mg(2+) serves as cofactor.

It localises to the plastid. Its subcellular location is the chloroplast membrane. The enzyme catalyses a 1,2-diacyl-sn-glycero-3-phosphate + CTP + H(+) = a CDP-1,2-diacyl-sn-glycerol + diphosphate. The protein operates within phospholipid metabolism; CDP-diacylglycerol biosynthesis; CDP-diacylglycerol from sn-glycerol 3-phosphate: step 3/3. With respect to regulation, highest activities is obtained at about 30 mM CTP and 2 mM phosphatidic acid (PA). May be involved in the synthesis of minor phospholipids and in modulation of IP3-mediated signal transduction. Promotes the biosynthesis of plastidial phosphatidylglycerol (PG) which is required for structure and function of thylakoid membranes and, hence, for photoautotrophic growth. This chain is Phosphatidate cytidylyltransferase 4, chloroplastic, found in Arabidopsis thaliana (Mouse-ear cress).